Reading from the N-terminus, the 113-residue chain is Ribonuclease P protein component (113 aa).

It belongs to the RnpA family. In terms of assembly, consists of a catalytic RNA component (M1 or rnpB) and a protein subunit.

It carries out the reaction Endonucleolytic cleavage of RNA, removing 5'-extranucleotides from tRNA precursor.. In terms of biological role, RNaseP catalyzes the removal of the 5'-leader sequence from pre-tRNA to produce the mature 5'-terminus. It can also cleave other RNA substrates such as 4.5S RNA. The protein component plays an auxiliary but essential role in vivo by binding to the 5'-leader sequence and broadening the substrate specificity of the ribozyme. In Finegoldia magna (strain ATCC 29328 / DSM 20472 / WAL 2508) (Peptostreptococcus magnus), this protein is Ribonuclease P protein component.